The sequence spans 299 residues: Bifunctional protein FolD 1 (299 aa).

NADP(+) is bound by residues 168 to 170 (GRS), Ser193, and Ile234.

Belongs to the tetrahydrofolate dehydrogenase/cyclohydrolase family. As to quaternary structure, homodimer.

The enzyme catalyses (6R)-5,10-methylene-5,6,7,8-tetrahydrofolate + NADP(+) = (6R)-5,10-methenyltetrahydrofolate + NADPH. It catalyses the reaction (6R)-5,10-methenyltetrahydrofolate + H2O = (6R)-10-formyltetrahydrofolate + H(+). It functions in the pathway one-carbon metabolism; tetrahydrofolate interconversion. Its function is as follows. Catalyzes the oxidation of 5,10-methylenetetrahydrofolate to 5,10-methenyltetrahydrofolate and then the hydrolysis of 5,10-methenyltetrahydrofolate to 10-formyltetrahydrofolate. The chain is Bifunctional protein FolD 1 from Mesorhizobium japonicum (strain LMG 29417 / CECT 9101 / MAFF 303099) (Mesorhizobium loti (strain MAFF 303099)).